A 569-amino-acid polypeptide reads, in one-letter code: Urease subunit beta (569 aa).

The Urease domain maps to 131–569 (GGIDTHIHFI…LSLAQLYNLF (439 aa)). His136, His138, and Lys219 together coordinate Ni(2+). Lys219 bears the N6-carboxylysine mark. His221 contributes to the substrate binding site. Ni(2+) contacts are provided by His248 and His274. Residue His322 is the Proton donor of the active site. Residue Asp362 participates in Ni(2+) binding.

It belongs to the metallo-dependent hydrolases superfamily. Urease alpha subunit family. Heterohexamer of 3 UreA (alpha) and 3 UreB (beta) subunits. It depends on Ni cation as a cofactor. Post-translationally, carboxylation allows a single lysine to coordinate two nickel ions.

It is found in the cytoplasm. It carries out the reaction urea + 2 H2O + H(+) = hydrogencarbonate + 2 NH4(+). It participates in nitrogen metabolism; urea degradation; CO(2) and NH(3) from urea (urease route): step 1/1. This Helicobacter felis (strain ATCC 49179 / CCUG 28539 / NCTC 12436 / CS1) protein is Urease subunit beta.